The primary structure comprises 92 residues: C-C motif chemokine 4 (92 aa).

Positions 1–23 (MKLCVSALSLLLLVAAFCAPGFS) are cleaved as a signal peptide. 2 disulfide bridges follow: cysteine 34–cysteine 58 and cysteine 35–cysteine 74.

Belongs to the intercrine beta (chemokine CC) family. As to quaternary structure, homodimer.

It localises to the secreted. Monokine with inflammatory and chemokinetic properties. In Mus musculus (Mouse), this protein is C-C motif chemokine 4 (Ccl4).